Reading from the N-terminus, the 168-residue chain is uncharacterized protein (168 aa).

The next 5 membrane-spanning stretches (helical) occupy residues 15–33 (YLTV…LAVL), 41–57 (LSLT…ASSL), 73–93 (WIGL…GALL), 108–128 (VPLL…WVLN), and 129–149 (NLIA…VLAI).

It is found in the cell membrane. This is an uncharacterized protein from Haemophilus influenzae (strain ATCC 51907 / DSM 11121 / KW20 / Rd).